The sequence spans 215 residues: Thymidylate kinase (215 aa).

12-19 (GIDGAGKS) lines the ATP pocket.

Belongs to the thymidylate kinase family.

It carries out the reaction dTMP + ATP = dTDP + ADP. Phosphorylation of dTMP to form dTDP in both de novo and salvage pathways of dTTP synthesis. The sequence is that of Thymidylate kinase from Albidiferax ferrireducens (strain ATCC BAA-621 / DSM 15236 / T118) (Rhodoferax ferrireducens).